Consider the following 238-residue polypeptide: Octanoyltransferase (238 aa).

The BPL/LPL catalytic domain occupies 44–224 (AGGPDSLLLL…AVLDALDGRI (181 aa)). Substrate is bound by residues 82–89 (RGGKITWH), 154–156 (AIG), and 167–169 (GFA). Residue Cys-185 is the Acyl-thioester intermediate of the active site.

This sequence belongs to the LipB family.

It localises to the cytoplasm. It catalyses the reaction octanoyl-[ACP] + L-lysyl-[protein] = N(6)-octanoyl-L-lysyl-[protein] + holo-[ACP] + H(+). Its pathway is protein modification; protein lipoylation via endogenous pathway; protein N(6)-(lipoyl)lysine from octanoyl-[acyl-carrier-protein]: step 1/2. Catalyzes the transfer of endogenously produced octanoic acid from octanoyl-acyl-carrier-protein onto the lipoyl domains of lipoate-dependent enzymes. Lipoyl-ACP can also act as a substrate although octanoyl-ACP is likely to be the physiological substrate. In Mycolicibacterium gilvum (strain PYR-GCK) (Mycobacterium gilvum (strain PYR-GCK)), this protein is Octanoyltransferase.